A 602-amino-acid chain; its full sequence is Elongation factor 4 (602 aa).

The region spanning 8–190 (DLIRNFSIVA…AIVHRLPPPK (183 aa)) is the tr-type G domain. Residues 20-25 (DHGKST) and 137-140 (NKID) each bind GTP.

This sequence belongs to the TRAFAC class translation factor GTPase superfamily. Classic translation factor GTPase family. LepA subfamily.

The protein resides in the cell inner membrane. It catalyses the reaction GTP + H2O = GDP + phosphate + H(+). Its function is as follows. Required for accurate and efficient protein synthesis under certain stress conditions. May act as a fidelity factor of the translation reaction, by catalyzing a one-codon backward translocation of tRNAs on improperly translocated ribosomes. Back-translocation proceeds from a post-translocation (POST) complex to a pre-translocation (PRE) complex, thus giving elongation factor G a second chance to translocate the tRNAs correctly. Binds to ribosomes in a GTP-dependent manner. The polypeptide is Elongation factor 4 (Cereibacter sphaeroides (strain ATCC 17029 / ATH 2.4.9) (Rhodobacter sphaeroides)).